We begin with the raw amino-acid sequence, 120 residues long: Autophagy-related protein 8C (120 aa).

Positions 1–20 (MARSSFKLEHPLERRQAEAN) are disordered. The Phosphatidylethanolamine amidated glycine moiety is linked to residue glycine 117. The propeptide at 118 to 120 (LFV) is removed in mature form.

This sequence belongs to the ATG8 family. In terms of assembly, interacts with ATG4. The C-terminal 3 residues are removed by ATG4 to expose Gly-117 at the C-terminus. The C-terminal Gly is then amidated with phosphatidylethanolamine by an activating system similar to that for ubiquitin.

It localises to the cytoplasmic vesicle. The protein localises to the autophagosome membrane. Its subcellular location is the vacuole membrane. It is found in the cytoplasm. The protein resides in the cytoskeleton. Functionally, ubiquitin-like modifier involved in autophagosomes formation. May mediate the delivery of the autophagosomes to the vacuole via the microtubule cytoskeleton. The protein is Autophagy-related protein 8C (ATG8C) of Oryza sativa subsp. indica (Rice).